A 481-amino-acid chain; its full sequence is Adenosylhomocysteinase (481 aa).

Substrate contacts are provided by Thr65, Asp140, and Glu200. Residue 201 to 203 coordinates NAD(+); that stretch reads TTT. Lys230 and Asp234 together coordinate substrate. NAD(+) is bound by residues Asn235, 264–269, Glu287, Asn322, 343–345, and Asn393; these read GYGDVG and IGH.

This sequence belongs to the adenosylhomocysteinase family. NAD(+) is required as a cofactor.

The protein resides in the cytoplasm. The enzyme catalyses S-adenosyl-L-homocysteine + H2O = L-homocysteine + adenosine. It participates in amino-acid biosynthesis; L-homocysteine biosynthesis; L-homocysteine from S-adenosyl-L-homocysteine: step 1/1. In terms of biological role, may play a key role in the regulation of the intracellular concentration of adenosylhomocysteine. This chain is Adenosylhomocysteinase, found in Polynucleobacter necessarius subsp. necessarius (strain STIR1).